A 472-amino-acid polypeptide reads, in one-letter code: 2-oxoisovalerate dehydrogenase subunit alpha 1, mitochondrial (472 aa).

The transit peptide at 1–56 directs the protein to the mitochondrion; that stretch reads MAIWFARSKTLVSSLRHNLNLSTILIKRDYSHRPIFYTTSQLSSTAYLSPFGSLRH. 185–187 lines the thiamine diphosphate pocket; sequence QYR. Residues Ser234, Thr239, and Gln240 each contribute to the K(+) site.

This sequence belongs to the BCKDHA family. Heterotetramer of alpha and beta chains. It depends on thiamine diphosphate as a cofactor.

The protein resides in the mitochondrion matrix. The catalysed reaction is N(6)-[(R)-lipoyl]-L-lysyl-[protein] + 3-methyl-2-oxobutanoate + H(+) = N(6)-[(R)-S(8)-2-methylpropanoyldihydrolipoyl]-L-lysyl-[protein] + CO2. In terms of biological role, the branched-chain alpha-keto dehydrogenase complex catalyzes the overall conversion of alpha-keto acids to acyl-CoA and CO(2). It contains multiple copies of three enzymatic components: branched-chain alpha-keto acid decarboxylase (E1), lipoamide acyltransferase (E2) and lipoamide dehydrogenase (E3). Required during sugar starvation. In Arabidopsis thaliana (Mouse-ear cress), this protein is 2-oxoisovalerate dehydrogenase subunit alpha 1, mitochondrial.